A 693-amino-acid polypeptide reads, in one-letter code: Elongation factor G (693 aa).

The tr-type G domain occupies 8–282; that stretch reads AKTRNIGIMA…AVIDYLPSPL (275 aa). GTP is bound by residues 17-24, 81-85, and 135-138; these read AHVDAGKT, DTPGH, and NKMD.

Belongs to the TRAFAC class translation factor GTPase superfamily. Classic translation factor GTPase family. EF-G/EF-2 subfamily.

The protein localises to the cytoplasm. Functionally, catalyzes the GTP-dependent ribosomal translocation step during translation elongation. During this step, the ribosome changes from the pre-translocational (PRE) to the post-translocational (POST) state as the newly formed A-site-bound peptidyl-tRNA and P-site-bound deacylated tRNA move to the P and E sites, respectively. Catalyzes the coordinated movement of the two tRNA molecules, the mRNA and conformational changes in the ribosome. The protein is Elongation factor G of Streptococcus thermophilus (strain CNRZ 1066).